The following is a 556-amino-acid chain: Adenine deaminase (556 aa).

The protein belongs to the metallo-dependent hydrolases superfamily. Adenine deaminase family. Mn(2+) serves as cofactor.

The enzyme catalyses adenine + H2O + H(+) = hypoxanthine + NH4(+). This chain is Adenine deaminase, found in Methanocaldococcus jannaschii (strain ATCC 43067 / DSM 2661 / JAL-1 / JCM 10045 / NBRC 100440) (Methanococcus jannaschii).